A 1032-amino-acid polypeptide reads, in one-letter code: Argonaute protein hrde-1 (1032 aa).

Disordered stretches follow at residues 1–51 (MADL…PIGR) and 298–375 (KLSE…YSPS). The segment at 1–551 (MADLLDKIMG…IQMTAKLLPP (551 aa)) is required to recruit the small-RNA amplification machinery to gene targets and promote gene silencing. The segment covering 18-33 (PKRDNRMNQDKDEPTS) has biased composition (basic and acidic residues). A compositionally biased stretch (gly residues) spans 303 to 313 (KGGGGGRGGYG). Composition is skewed to basic and acidic residues over residues 315 to 335 (SDSRDSRGGYRGGRSDSRDFR) and 343 to 364 (GNDRYRDESRGRRDMYDSRRDS). The 106-residue stretch at 376-481 (DAAELEHAFG…FPMELLRIAP (106 aa)) folds into the PAZ domain. The Piwi domain occupies 650-977 (DILVGIAREK…LAKRGRNNYK (328 aa)).

This sequence belongs to the argonaute family. WAGO subfamily. In terms of tissue distribution, expressed in the nuclei of male and female germ cells.

The protein localises to the cytoplasm. It localises to the cytoplasmic ribonucleoprotein granule. Its subcellular location is the nucleus. Its function is as follows. Argonaute protein which is involved in the endogenous small interfering RNA (endo-siRNA) pathway and is required for RNA-mediated gene silencing (RNAi) in the germline. Interacts with secondary 22G-RNAs in an hrde-2-dependent manner; 22G-RNAs are RNA-dependent RNA polymerase-derived endo-siRNAs, typically 22 nucleotides in length with a 5'-guanosine residue. Plays a key role in transgenerational epigenetic inheritance and germline immortality. May be involved in transgenerational gene silencing both by inducing subnuclear-co-localization of target genes into heterochromatin and by activation of small RNA amplification in the nuage. In Caenorhabditis elegans, this protein is Argonaute protein hrde-1.